We begin with the raw amino-acid sequence, 169 residues long: Ribosome-binding factor A (169 aa).

Residues 124 to 169 (AGAKHAGDADPYKSDIPEDVEIDEDDFDEEDEDLIDDEELDEDGNK) form a disordered region. Over residues 128–139 (HAGDADPYKSDI) the composition is skewed to basic and acidic residues. Positions 140-169 (PEDVEIDEDDFDEEDEDLIDDEELDEDGNK) are enriched in acidic residues.

Belongs to the RbfA family. As to quaternary structure, monomer. Binds 30S ribosomal subunits, but not 50S ribosomal subunits or 70S ribosomes.

The protein resides in the cytoplasm. Functionally, one of several proteins that assist in the late maturation steps of the functional core of the 30S ribosomal subunit. Associates with free 30S ribosomal subunits (but not with 30S subunits that are part of 70S ribosomes or polysomes). Required for efficient processing of 16S rRNA. May interact with the 5'-terminal helix region of 16S rRNA. The sequence is that of Ribosome-binding factor A from Arthrobacter sp. (strain FB24).